Reading from the N-terminus, the 1093-residue chain is Isomaltosyltransferase (1093 aa).

Residues 1-29 (MYVRNLTGSFRFSLSFLLCFCLFVPSIYA) form the signal peptide. The active-site Nucleophile is Asp566. The active site involves Glu569. Asp631 acts as the Proton donor in catalysis. The 124-residue stretch at 968–1091 (VEYEAEFGVQ…GINFDNIAIV (124 aa)) folds into the CBM6 domain.

This sequence belongs to the glycosyl hydrolase 31 family.

It localises to the secreted. It carries out the reaction 2 alpha-isomaltosyl-(1-&gt;4)-D-maltotriose = alpha-isomaltosyl-(1-&gt;3)-alpha-isomaltosyl-(1-&gt;4)-D-maltotriose + D-maltotriose. The catalysed reaction is alpha-isomaltosyl-(1-&gt;3)-alpha-isomaltosyl-(1-&gt;4)-D-maltotriose = cyclobis-(1-&gt;3)-alpha-D-isomaltosyl + D-maltotriose. Strongly inhibited by Hg(2+) and moderately inhibited by Cu(2+) and Pb(2+). Other metal ions, Tris and EDTA have almost no effects. Its function is as follows. Glycosyltransferase involved, together with CtsZ, in the conversion of alpha-1,4-glucan into a cyclic tetrasaccharide (CTS) constructed from four alpha-glucopyranosyl residues. Catalyzes the alpha-(1-&gt;3) transfer of the isomaltosyl moiety of alpha-isomaltosyl-(1-&gt;4)-D-maltotriose to another alpha-isomaltosyl-(1-&gt;4)-D-maltotriose, resulting in alpha-isomaltosyl-(1-&gt;3)-alpha-isomaltosyl-alpha-(1-&gt;4)-maltotriose formation. In addition, the enzyme catalyzes the intramolecular cyclization of the product, generating the cyclic tetrasaccharide cyclobis-(1-&gt;6)-alpha-nigerosyl. In Sporosarcina globispora (Bacillus globisporus), this protein is Isomaltosyltransferase.